Consider the following 171-residue polypeptide: S-ribosylhomocysteine lyase (171 aa).

Fe cation is bound by residues His-54, His-58, and Cys-128.

It belongs to the LuxS family. In terms of assembly, homodimer. Requires Fe cation as cofactor.

It catalyses the reaction S-(5-deoxy-D-ribos-5-yl)-L-homocysteine = (S)-4,5-dihydroxypentane-2,3-dione + L-homocysteine. Involved in the synthesis of autoinducer 2 (AI-2) which is secreted by bacteria and is used to communicate both the cell density and the metabolic potential of the environment. The regulation of gene expression in response to changes in cell density is called quorum sensing. Catalyzes the transformation of S-ribosylhomocysteine (RHC) to homocysteine (HC) and 4,5-dihydroxy-2,3-pentadione (DPD). This Enterobacter sp. (strain 638) protein is S-ribosylhomocysteine lyase.